The chain runs to 392 residues: Formate-dependent phosphoribosylglycinamide formyltransferase (392 aa).

N(1)-(5-phospho-beta-D-ribosyl)glycinamide is bound by residues 22–23 (EL) and Glu82. ATP is bound by residues Arg114, Lys155, 160–165 (SSGKGQ), 195–198 (EGVV), and Glu203. Residues 119–308 (RLAAEELGLP…EFALHVRAFL (190 aa)) form the ATP-grasp domain. Glu267 and Glu279 together coordinate Mg(2+). N(1)-(5-phospho-beta-D-ribosyl)glycinamide-binding positions include Asp286, Lys355, and 362 to 363 (RR).

The protein belongs to the PurK/PurT family. In terms of assembly, homodimer.

The catalysed reaction is N(1)-(5-phospho-beta-D-ribosyl)glycinamide + formate + ATP = N(2)-formyl-N(1)-(5-phospho-beta-D-ribosyl)glycinamide + ADP + phosphate + H(+). It functions in the pathway purine metabolism; IMP biosynthesis via de novo pathway; N(2)-formyl-N(1)-(5-phospho-D-ribosyl)glycinamide from N(1)-(5-phospho-D-ribosyl)glycinamide (formate route): step 1/1. In terms of biological role, involved in the de novo purine biosynthesis. Catalyzes the transfer of formate to 5-phospho-ribosyl-glycinamide (GAR), producing 5-phospho-ribosyl-N-formylglycinamide (FGAR). Formate is provided by PurU via hydrolysis of 10-formyl-tetrahydrofolate. The polypeptide is Formate-dependent phosphoribosylglycinamide formyltransferase (Salmonella choleraesuis (strain SC-B67)).